The chain runs to 125 residues: TSSK6-activating co-chaperone protein (125 aa).

The disordered stretch occupies residues 1 to 22 (MEQLPSHPTNRRAKEEGNAVPL).

Belongs to the TSACC family. Interacts with HSP70. Associates with HSP90. Interacts with TSSK6; this interaction is direct and recruits TSACC to HSP90.

Its function is as follows. Co-chaperone that facilitates HSP-mediated activation of TSSK6. The chain is TSSK6-activating co-chaperone protein (TSACC) from Bos taurus (Bovine).